The following is a 436-amino-acid chain: Antilisterial bacteriocin subtilosin biosynthesis protein AlbD (436 aa).

10 helical membrane passes run 27–47, 55–75, 113–133, 134–154, 164–184, 187–207, 240–260, 270–290, 315–335, and 395–415; these read IAAG…QAGI, TYII…SVTS, LFFF…GAQT, LFWL…GVVL, LMFL…ALMP, TIPL…PVFL, AMLL…FQMM, IYIV…LYSI, FYSG…GFIS, and AILA…LVIV.

It localises to the cell membrane. In terms of biological role, involved in the production of the bacteriocin subtilosin. Required for immunity to subtilosin. The sequence is that of Antilisterial bacteriocin subtilosin biosynthesis protein AlbD (albD) from Bacillus subtilis (strain 168).